A 134-amino-acid chain; its full sequence is Large ribosomal subunit protein bL12 (134 aa).

Belongs to the bacterial ribosomal protein bL12 family. As to quaternary structure, homodimer. Part of the ribosomal stalk of the 50S ribosomal subunit. Forms a multimeric L10(L12)X complex, where L10 forms an elongated spine to which 2 to 4 L12 dimers bind in a sequential fashion. Binds GTP-bound translation factors.

Forms part of the ribosomal stalk which helps the ribosome interact with GTP-bound translation factors. Is thus essential for accurate translation. The protein is Large ribosomal subunit protein bL12 of Chlamydia abortus (strain DSM 27085 / S26/3) (Chlamydophila abortus).